A 123-amino-acid polypeptide reads, in one-letter code: Defensin beta 118 (123 aa).

Positions 1 to 19 (MKLLLLALPVLVLLPQVIP) are cleaved as a signal peptide. 3 disulfide bridges follow: Cys27-Cys54, Cys34-Cys48, and Cys38-Cys55. The propeptide occupies 65 to 123 (VPMTSPTPLSDSTPGIIDDILTVRFTTDYFEVSSKKDMVEESEAGRGTETSLPNVHHSS). The segment covering 100–110 (KDMVEESEAGR) has biased composition (basic and acidic residues). Residues 100–123 (KDMVEESEAGRGTETSLPNVHHSS) form a disordered region. Positions 112-123 (TETSLPNVHHSS) are enriched in polar residues.

Belongs to the beta-defensin family. The three-dimensional structure formed by the three intramolecular disulfide bridges is indispensable for antimicrobial activity.

It localises to the secreted. Functionally, host defense peptide that exhibits antimicrobial activity against both Gram-negative bacteria, such as E.coli and S.typhimurium, and Gram-positive bacteria, such as S.aureus and B.subtilis. Inhibits cell adhesion of E.coli on intestinal epithelial enterocytes. Causes rapid permeabilization of both the outer and inner membrane of E.coli, leading to morphological alterations on the bacterial surface. Binds to bacterial lipopolysaccharides (LPS) with high affinity, and may thereby be involved in immunoregulation through LPS neutralization. May contribute to epididymal innate immunity and protect the sperm against attack by microorganisms. This chain is Defensin beta 118 (DEFB118), found in Pan troglodytes (Chimpanzee).